A 280-amino-acid polypeptide reads, in one-letter code: MQNHVISLASAAERRAHIAATFGVRGIPFQFFDALMPSEELNRMMAELVPGLAKQHLLSEVEKACFMSHAVLWKQALDEGLPYVAVFEDDVLLGKDAEKFLAEDTWLEERFDKDSAFIVRLETMFAKVIVRPDKVLNYENRSFPLLESEHWGTAGYIISREAMRFFLERFAVLPAEWIKAVDWMMFTYFFDKEGMPVYQVNPALCTQELHYAKFLSKNSMLGSDLEKDREQERRHRRSLKVMFDLKRALGKFGREKKKRMERQRQAELEKAYGRRVISFK.

Belongs to the glycosyltransferase 25 family.

It participates in glycan metabolism; lacto-N-neotetraose biosynthesis. It functions in the pathway bacterial outer membrane biogenesis; lipooligosaccharide biosynthesis. In terms of biological role, adds the first galactose to the lacto-N-tetraose chain in lipooligosaccharide (LOS). The sequence is that of Lacto-N-neotetraose biosynthesis glycosyltransferase LgtE (lgtE) from Neisseria meningitidis serogroup B (strain ATCC BAA-335 / MC58).